A 1853-amino-acid polypeptide reads, in one-letter code: DNA-directed RNA polymerase II subunit RPB1 (1853 aa).

Cysteine 66, cysteine 69, cysteine 76, histidine 79, cysteine 106, cysteine 109, cysteine 149, and cysteine 177 together coordinate Zn(2+). The interval 256–268 (PAVVTFGSAKNQD) is lid loop. The interval 314-331 (NCIPGLPTATQKGGRPLK) is rudder loop. Aspartate 489, aspartate 491, and aspartate 493 together coordinate Mg(2+). The segment at 827–839 (PSEFFFHAMGGRE) is bridging helix. Residue lysine 1260 forms a Glycyl lysine isopeptide (Lys-Gly) (interchain with G-Cter in ubiquitin) linkage. Disordered regions lie at residues 1520–1568 (PWSP…PRTP) and 1589–1853 (SPHY…DPQN). Low complexity-rich tracts occupy residues 1589 to 1811 (SPHY…TPSP) and 1821 to 1853 (YSPS…DPQN). Repeat copies occupy residues 1592–1598 (YSPTSPS), 1599–1605 (YSPTSPA), 1616–1622 (YSPTSPS), 1623–1629 (YSPTSPS), 1630–1636 (YSPTSPS), 1637–1643 (YSPTSPS), 1644–1650 (YSPTSPS), 1651–1657 (YSPTSPS), 1658–1664 (YSPTSPS), 1665–1671 (YSPTSPS), 1679–1685 (YSPTSPT), 1686–1692 (YSPTSPT), 1693–1699 (YSPTSPT), 1700–1706 (YSPTSPT), 1707–1713 (YSPTSPS), 1717–1723 (YSPSSPK), 1724–1730 (YSPSSPT), 1731–1737 (YSPTSPS), 1752–1758 (YSPSSPT), 1759–1765 (YTPSSPT), 1779–1785 (YSPTSPT), 1786–1792 (YSPTSPS), 1800–1806 (YSPTSPT), 1821–1827 (YSPSSPT), 1828–1834 (YSPSSPT), and 1842–1848 (YSPSSPT). Residues 1592–1848 (YSPTSPSYSP…SPSYSPSSPT (257 aa)) form a C-terminal domain (CTD); 26 X 7 AA approximate tandem repeats of Y-[ST]-P-[ST]-S-P-[AGKNQRST] region.

The protein belongs to the RNA polymerase beta' chain family. In terms of assembly, component of the RNA polymerase II (Pol II) complex consisting of 12 subunits. Interacts with sig-7. The tandem 7 residues repeats in the C-terminal domain (CTD) can be highly phosphorylated. The phosphorylation activates Pol II. Phosphorylation occurs mainly at residues 'Ser-2' and 'Ser-5' of the heptapeptide repeat and starts at the 3- to 4-cell embryonic stage. This phosphorylation also occurs in the early stages of oocyte development and is not detected in oocytes arrested at the meiotic diakinesis stage. In the somatic lineage, phosphorylation at 'Ser-2' is mediated by cdk-12 downstream of cdk-9 whereas in the germline lineage cdk-12 phosphorylates 'Ser-2' independently of cdk-9. Phosphorylation is likely mediated by cdk-7. May be dephosphorylated by fcp-1 in diakinetic oocytes and in 1-cell and 2-cell embryos. Dephosphorylated at 'Ser-5' of the heptapeptide repeat by ssup-72. The phosphorylation state is believed to result from the balanced action of site-specific CTD kinases and phosphatase, and a 'CTD code' that specifies the position of Pol II within the transcription cycle has been proposed. In terms of processing, following transcription stress, the elongating form of RNA polymerase II (RNA pol IIo) is polyubiquitinated via 'Lys-63'-linkages on Lys-1260 at DNA damage sites without leading to degradation: ubiquitination promotes RNA pol IIo backtracking to allow access by the transcription-coupled nucleotide excision repair (TC-NER) machinery. Subsequent DEF1-dependent polyubiquitination by the elongin complex via 'Lys-48'-linkages may lead to proteasome-mediated degradation; presumably at stalled RNA pol II where TC-NER has failed, to halt global transcription and enable 'last resort' DNA repair pathways.

Its subcellular location is the nucleus. It is found in the chromosome. It catalyses the reaction RNA(n) + a ribonucleoside 5'-triphosphate = RNA(n+1) + diphosphate. Its function is as follows. DNA-dependent RNA polymerase catalyzes the transcription of DNA into RNA using the four ribonucleoside triphosphates as substrates. Largest and catalytic component of RNA polymerase II which synthesizes mRNA precursors and many functional non-coding RNAs. Forms the polymerase active center together with the second largest subunit. Pol II is the central component of the basal RNA polymerase II transcription machinery. It is composed of mobile elements that move relative to each other. RPB1 is part of the core element with the central large cleft, the clamp element that moves to open and close the cleft and the jaws that are thought to grab the incoming DNA template. At the start of transcription, a single-stranded DNA template strand of the promoter is positioned within the central active site cleft of Pol II. A bridging helix emanates from RPB1 and crosses the cleft near the catalytic site and is thought to promote translocation of Pol II by acting as a ratchet that moves the RNA-DNA hybrid through the active site by switching from straight to bent conformations at each step of nucleotide addition. During transcription elongation, Pol II moves on the template as the transcript elongates. Elongation is influenced by the phosphorylation status of the C-terminal domain (CTD) of Pol II largest subunit (RPB1), which serves as a platform for assembly of factors that regulate transcription initiation, elongation, termination and mRNA processing. Involved in the transcription of several genes including those involved in embryogenesis. This is DNA-directed RNA polymerase II subunit RPB1 from Caenorhabditis briggsae.